A 202-amino-acid chain; its full sequence is Imidazoleglycerol-phosphate dehydratase (202 aa).

Belongs to the imidazoleglycerol-phosphate dehydratase family.

The protein localises to the cytoplasm. The enzyme catalyses D-erythro-1-(imidazol-4-yl)glycerol 3-phosphate = 3-(imidazol-4-yl)-2-oxopropyl phosphate + H2O. It participates in amino-acid biosynthesis; L-histidine biosynthesis; L-histidine from 5-phospho-alpha-D-ribose 1-diphosphate: step 6/9. This Rhizobium etli (strain ATCC 51251 / DSM 11541 / JCM 21823 / NBRC 15573 / CFN 42) protein is Imidazoleglycerol-phosphate dehydratase.